The following is a 417-amino-acid chain: Cobalamin binding intrinsic factor (417 aa).

The first 18 residues, 1 to 18 (MAWLTLYLLSVLWAVAGT), serve as a signal peptide directing secretion. Intrachain disulfides connect Cys26–Cys246, Cys103–Cys288, and Cys143–Cys182. Cob(II)alamin is bound at residue Asp171. The residue at position 191 (Ser191) is a Phosphoserine. Residues Asp222 and Gln270 each contribute to the cob(II)alamin site. Residues Asn311 and Asn330 are each glycosylated (N-linked (GlcNAc...) asparagine). Residues 365–370 (SWGLIV) and 386–395 (WEFLSGKTPL) contribute to the cob(II)alamin site. A glycan (N-linked (GlcNAc...) asparagine) is linked at Asn413.

This sequence belongs to the eukaryotic cobalamin transport proteins family. In terms of assembly, interacts with CUBN (via CUB domains). As to expression, gastric mucosa.

Its subcellular location is the secreted. Functionally, promotes absorption of the essential vitamin cobalamin (Cbl) in the ileum. After interaction with CUBN, the CBLIF-cobalamin complex is internalized via receptor-mediated endocytosis. The protein is Cobalamin binding intrinsic factor (Cblif) of Mus musculus (Mouse).